Reading from the N-terminus, the 151-residue chain is UPF0179 protein MJ1627 (151 aa).

This sequence belongs to the UPF0179 family.

This Methanocaldococcus jannaschii (strain ATCC 43067 / DSM 2661 / JAL-1 / JCM 10045 / NBRC 100440) (Methanococcus jannaschii) protein is UPF0179 protein MJ1627.